Here is a 970-residue protein sequence, read N- to C-terminus: Sodium/calcium exchanger 1 (970 aa).

The first 32 residues, 1-32 (MLRLSLPPNVSMGFRLVALVALLFSHVDHITA), serve as a signal peptide directing secretion. Topologically, residues 33 to 71 (DTEAETGGNETTECTGSYYCKKGVILPIWEPQDPSFGDK) are extracellular. The N-linked (GlcNAc...) asparagine glycan is linked to asparagine 41. A helical membrane pass occupies residues 72 to 92 (IARATVYFVAMVYMFLGVSII). At 93–133 (ADRFMSSIEVITSQEKEITIKKPNGETTKTTVRIWNETVSN) the chain is on the cytoplasmic side. A helical transmembrane segment spans residues 134–154 (LTLMALGSSAPEILLSVIEVC). An Alpha-1 repeat occupies 138–178 (ALGSSAPEILLSVIEVCGHNFTAGDLGPSTIVGSAAFNMFI). Topologically, residues 155 to 167 (GHNFTAGDLGPST) are extracellular. Asparagine 157 is a glycosylation site (N-linked (GlcNAc...) asparagine). Residues 168–188 (IVGSAAFNMFIIIALCVYVVP) form a helical membrane-spanning segment. The Cytoplasmic portion of the chain corresponds to 189 to 201 (DGETRKIKHLRVF). Residues 202–222 (FVTAAWSIFAYTWLYIILSVS) traverse the membrane as a helical segment. Residues 223-228 (SPGVVE) are Extracellular-facing. Residues 229–249 (VWEGLLTFFFFPICVVFAWVA) form a helical membrane-spanning segment. Over 250 to 797 (DRRLLFYKYV…FVPPTEYWNG (548 aa)) the chain is Cytoplasmic. The segment at 251–270 (RRLLFYKYVYKRYRAGKQRG) is putative calmodulin-binding region. Serine 282 and serine 389 each carry phosphoserine. 2 consecutive Calx-beta domains span residues 393 to 493 (VNME…VHLS) and 524 to 624 (ATIT…IEIG). Ca(2+) contacts are provided by glutamate 417, aspartate 453, aspartate 478, aspartate 479, isoleucine 481, glutamate 483, glutamate 486, aspartate 530, aspartate 531, aspartate 532, glutamate 548, aspartate 584, aspartate 610, glutamate 611, glutamate 612, and glutamate 715. Residues 798 to 818 (WACFIVSILMIGLLTAFIGDL) form a helical membrane-spanning segment. Over 819-821 (ASH) the chain is Extracellular. Residues 822–842 (FGCTIGLKDSVTAVVFVALGT) traverse the membrane as a helical segment. The Alpha-2 repeat unit spans residues 839-875 (ALGTSVPDTFASKVAATQDQYADASIGNVTGSNAVNV). The Cytoplasmic portion of the chain corresponds to 843-871 (SVPDTFASKVAATQDQYADASIGNVTGSN). The helical transmembrane segment at 872–892 (AVNVFLGIGVAWSIAAIYHAA) threads the bilayer. The Extracellular portion of the chain corresponds to 893-903 (NGEQFKVSPGT). A helical transmembrane segment spans residues 904–924 (LAFSVTLFTIFAFINVGVLLY). At 925-941 (RRRPEIGGELGGPRTAK) the chain is on the cytoplasmic side. The helical transmembrane segment at 942–962 (LLTSSLFVLLWLLYIFFSSLE) threads the bilayer. The Extracellular portion of the chain corresponds to 963–970 (AYCHIKGF).

This sequence belongs to the Ca(2+):cation antiporter (CaCA) (TC 2.A.19) family. SLC8 subfamily. In terms of tissue distribution, detected in heart, kidney and brain (at protein level).

The protein resides in the cell membrane. It catalyses the reaction Ca(2+)(in) + 3 Na(+)(out) = Ca(2+)(out) + 3 Na(+)(in). With respect to regulation, activated by micromolar levels of Ca(2+). Mediates the exchange of one Ca(2+) ion against three to four Na(+) ions across the cell membrane, and thereby contributes to the regulation of cytoplasmic Ca(2+) levels and Ca(2+)-dependent cellular processes. Contributes to Ca(2+) transport during excitation-contraction coupling in muscle. In a first phase, voltage-gated channels mediate the rapid increase of cytoplasmic Ca(2+) levels due to release of Ca(2+) stores from the endoplasmic reticulum. SLC8A1 mediates the export of Ca(2+) from the cell during the next phase, so that cytoplasmic Ca(2+) levels rapidly return to baseline. Required for normal embryonic heart development and the onset of heart contractions. This chain is Sodium/calcium exchanger 1 (Slc8a1), found in Mus musculus (Mouse).